A 270-amino-acid polypeptide reads, in one-letter code: 4-hydroxy-tetrahydrodipicolinate reductase (270 aa).

Residues 11–16 (GASGRM) and E37 each bind NAD(+). R38 is an NADP(+) binding site. NAD(+) contacts are provided by residues 101–103 (GTT) and 125–128 (SPNM). The active-site Proton donor/acceptor is the H158. H159 provides a ligand contact to (S)-2,3,4,5-tetrahydrodipicolinate. K162 serves as the catalytic Proton donor. 168–169 (GT) lines the (S)-2,3,4,5-tetrahydrodipicolinate pocket.

It belongs to the DapB family.

It is found in the cytoplasm. The enzyme catalyses (S)-2,3,4,5-tetrahydrodipicolinate + NAD(+) + H2O = (2S,4S)-4-hydroxy-2,3,4,5-tetrahydrodipicolinate + NADH + H(+). The catalysed reaction is (S)-2,3,4,5-tetrahydrodipicolinate + NADP(+) + H2O = (2S,4S)-4-hydroxy-2,3,4,5-tetrahydrodipicolinate + NADPH + H(+). The protein operates within amino-acid biosynthesis; L-lysine biosynthesis via DAP pathway; (S)-tetrahydrodipicolinate from L-aspartate: step 4/4. Its function is as follows. Catalyzes the conversion of 4-hydroxy-tetrahydrodipicolinate (HTPA) to tetrahydrodipicolinate. The sequence is that of 4-hydroxy-tetrahydrodipicolinate reductase from Shewanella denitrificans (strain OS217 / ATCC BAA-1090 / DSM 15013).